The primary structure comprises 159 residues: SsrA-binding protein (159 aa).

It belongs to the SmpB family.

It localises to the cytoplasm. Functionally, required for rescue of stalled ribosomes mediated by trans-translation. Binds to transfer-messenger RNA (tmRNA), required for stable association of tmRNA with ribosomes. tmRNA and SmpB together mimic tRNA shape, replacing the anticodon stem-loop with SmpB. tmRNA is encoded by the ssrA gene; the 2 termini fold to resemble tRNA(Ala) and it encodes a 'tag peptide', a short internal open reading frame. During trans-translation Ala-aminoacylated tmRNA acts like a tRNA, entering the A-site of stalled ribosomes, displacing the stalled mRNA. The ribosome then switches to translate the ORF on the tmRNA; the nascent peptide is terminated with the 'tag peptide' encoded by the tmRNA and targeted for degradation. The ribosome is freed to recommence translation, which seems to be the essential function of trans-translation. The polypeptide is SsrA-binding protein (Bifidobacterium adolescentis (strain ATCC 15703 / DSM 20083 / NCTC 11814 / E194a)).